We begin with the raw amino-acid sequence, 227 residues long: PKHD-type hydroxylase Bphy_5374 (227 aa).

In terms of domain architecture, Fe2OG dioxygenase spans 79–179 (KVYPPLFNRY…RVASFFWVQS (101 aa)). Residues His-97, Asp-99, and His-160 each contribute to the Fe cation site. Residue Arg-170 coordinates 2-oxoglutarate.

It depends on Fe(2+) as a cofactor. Requires L-ascorbate as cofactor.

This Paraburkholderia phymatum (strain DSM 17167 / CIP 108236 / LMG 21445 / STM815) (Burkholderia phymatum) protein is PKHD-type hydroxylase Bphy_5374.